An 82-amino-acid chain; its full sequence is Acyl carrier protein (82 aa).

Positions 4-79 constitute a Carrier domain; sequence PEMEERLRKI…DALNYLETHQ (76 aa). Serine 39 carries the O-(pantetheine 4'-phosphoryl)serine modification.

Belongs to the acyl carrier protein (ACP) family. Post-translationally, 4'-phosphopantetheine is transferred from CoA to a specific serine of apo-ACP by AcpS. This modification is essential for activity because fatty acids are bound in thioester linkage to the sulfhydryl of the prosthetic group.

The protein resides in the cytoplasm. It functions in the pathway lipid metabolism; fatty acid biosynthesis. Functionally, carrier of the growing fatty acid chain in fatty acid biosynthesis. The protein is Acyl carrier protein of Chloroflexus aurantiacus (strain ATCC 29366 / DSM 635 / J-10-fl).